Here is a 115-residue protein sequence, read N- to C-terminus: T cell receptor beta variable 11-3 (115 aa).

Residues 1–21 (MGTRLLCWVAFCLLVEELIEA) form the signal peptide. The 94-residue stretch at 22–115 (GVVQSPRYKI…SAVYLCASSL (94 aa)) folds into the Ig-like domain. Cysteines 42 and 111 form a disulfide.

Alpha-beta TR is a heterodimer composed of an alpha and beta chain; disulfide-linked. The alpha-beta TR is associated with the transmembrane signaling CD3 coreceptor proteins to form the TR-CD3 (TcR or TCR). The assembly of alpha-beta TR heterodimers with CD3 occurs in the endoplasmic reticulum where a single alpha-beta TR heterodimer associates with one CD3D-CD3E heterodimer, one CD3G-CD3E heterodimer and one CD247 homodimer forming a stable octameric structure. CD3D-CD3E and CD3G-CD3E heterodimers preferentially associate with TR alpha and TR beta chains, respectively. The association of the CD247 homodimer is the last step of TcR assembly in the endoplasmic reticulum and is required for transport to the cell surface.

The protein resides in the cell membrane. Functionally, v region of the variable domain of T cell receptor (TR) beta chain that participates in the antigen recognition. Alpha-beta T cell receptors are antigen specific receptors which are essential to the immune response and are present on the cell surface of T lymphocytes. Recognize peptide-major histocompatibility (MH) (pMH) complexes that are displayed by antigen presenting cells (APC), a prerequisite for efficient T cell adaptive immunity against pathogens. Binding of alpha-beta TR to pMH complex initiates TR-CD3 clustering on the cell surface and intracellular activation of LCK that phosphorylates the ITAM motifs of CD3G, CD3D, CD3E and CD247 enabling the recruitment of ZAP70. In turn ZAP70 phosphorylates LAT, which recruits numerous signaling molecules to form the LAT signalosome. The LAT signalosome propagates signal branching to three major signaling pathways, the calcium, the mitogen-activated protein kinase (MAPK) kinase and the nuclear factor NF-kappa-B (NF-kB) pathways, leading to the mobilization of transcription factors that are critical for gene expression and essential for T cell growth and differentiation. The T cell repertoire is generated in the thymus, by V-(D)-J rearrangement. This repertoire is then shaped by intrathymic selection events to generate a peripheral T cell pool of self-MH restricted, non-autoaggressive T cells. Post-thymic interaction of alpha-beta TR with the pMH complexes shapes TR structural and functional avidity. The chain is T cell receptor beta variable 11-3 from Homo sapiens (Human).